A 431-amino-acid polypeptide reads, in one-letter code: D-inositol 3-phosphate glycosyltransferase (431 aa).

His-21 contributes to the 1D-myo-inositol 3-phosphate binding site. Residues 27 to 28 (QP) and Gly-35 contribute to the UDP-N-acetyl-alpha-D-glucosamine site. 1D-myo-inositol 3-phosphate is bound by residues 32-37 (DAGGMN), Arg-90, Tyr-123, Thr-147, and Arg-167. 3 residues coordinate UDP-N-acetyl-alpha-D-glucosamine: Arg-241, Lys-246, and Gln-307. Mg(2+) contacts are provided by Tyr-316, Arg-317, and Ala-319. 2 residues coordinate UDP-N-acetyl-alpha-D-glucosamine: Glu-329 and Glu-337. Thr-343 contributes to the Mg(2+) binding site.

The protein belongs to the glycosyltransferase group 1 family. MshA subfamily. As to quaternary structure, homodimer.

It carries out the reaction 1D-myo-inositol 3-phosphate + UDP-N-acetyl-alpha-D-glucosamine = 1D-myo-inositol 2-acetamido-2-deoxy-alpha-D-glucopyranoside 3-phosphate + UDP + H(+). Functionally, catalyzes the transfer of a N-acetyl-glucosamine moiety to 1D-myo-inositol 3-phosphate to produce 1D-myo-inositol 2-acetamido-2-deoxy-glucopyranoside 3-phosphate in the mycothiol biosynthesis pathway. The chain is D-inositol 3-phosphate glycosyltransferase from Saccharomonospora viridis (strain ATCC 15386 / DSM 43017 / JCM 3036 / CCUG 5913 / NBRC 12207 / NCIMB 9602 / P101) (Thermoactinomyces viridis).